A 406-amino-acid polypeptide reads, in one-letter code: Gustatory receptor for sugar taste 64b (406 aa).

The Cytoplasmic segment spans residues 1–47 (MPQGETFHRAVSNVLFISQIYGLLPVSNVRALDVADIRFRWCSPRIL). A helical transmembrane segment spans residues 48 to 68 (YSLLIGILNLSEFGAVINYVI). Residues 69–79 (KVTINFHTSST) lie on the Extracellular side of the membrane. The helical transmembrane segment at 80 to 100 (LSLYIVCLLEHLFFWRLAIQW) threads the bilayer. The Cytoplasmic segment spans residues 101–130 (PRIMRTWHGVEQLFLRVPYRFYGEYRIKRR). The chain crosses the membrane as a helical span at residues 131-151 (IYIVFTIVMSSALVEHCLLLG). Over 152–183 (NSFHLSNMERTQCKINVTYFESIYKWERPHLY) the chain is Extracellular. The N-linked (GlcNAc...) asparagine glycan is linked to Asn167. A helical transmembrane segment spans residues 184–204 (MILPYHFWMLPILEWVNQTIA). Topologically, residues 205–265 (YPRSFTDCFI…KRLVHLLDAA (61 aa)) are cytoplasmic. The chain crosses the membrane as a helical span at residues 266–286 (IAPLVLLAFGNNMSFICFQLF). Residues 287–290 (NSFK) are Extracellular-facing. A helical membrane pass occupies residues 291–311 (NIGVDFLVMLAFWYSLGFAVV). The Cytoplasmic portion of the chain corresponds to 312-370 (RTLLTIFVASSINDYERKIVTALRDVPSRAWSIEVQRFSEQLGNDTTALSGSGFFYLTR). Residues 371–391 (SLVLAMGTTIITYELMISDVI) form a helical membrane-spanning segment. The Extracellular segment spans residues 392–406 (NQGSIRQKTQYCREY).

It belongs to the insect chemoreceptor superfamily. Gustatory receptor (GR) family. Gr5a subfamily. Expressed in Gr5a-expressing sugar-sensing cells.

It localises to the cell membrane. Functionally, one of the few identified sugar gustatory receptors identified so far and which promotes the starvation-induced increase of feeding motivation. This Drosophila melanogaster (Fruit fly) protein is Gustatory receptor for sugar taste 64b (Gr64b).